The chain runs to 168 residues: RxLR effector protein CRE8 (168 aa).

The first 23 residues, 1–23 (MRLPSILVVAASTLFLHYGYTSA), serve as a signal peptide directing secretion. The short motif at 54–69 (RFLRDGKIAEGDNEER) is the RxLR-dEER element.

The protein belongs to the RxLR effector family.

The protein resides in the secreted. It is found in the host cell. Effector that is involved in host plant infection. Contributes to virulence during the early infection stage, by inhibiting plant defense responses induced by both PAMP-triggered immunity (PTI) and effector-triggered immunity (ETI). The protein is RxLR effector protein CRE8 of Phytophthora infestans (strain T30-4) (Potato late blight agent).